Here is a 267-residue protein sequence, read N- to C-terminus: Small ribosomal subunit protein uS2c (267 aa).

The segment at 237 to 267 (KQKIKKTGVKISGNRRTSSITKKRNPASSKI) is disordered. The segment covering 250 to 267 (NRRTSSITKKRNPASSKI) has biased composition (polar residues).

It belongs to the universal ribosomal protein uS2 family.

It is found in the plastid. Its subcellular location is the chloroplast. The protein is Small ribosomal subunit protein uS2c (rps2) of Chlorella vulgaris (Green alga).